The primary structure comprises 878 residues: Alanine--tRNA ligase (878 aa).

4 residues coordinate Zn(2+): His-565, His-569, Cys-667, and His-671.

It belongs to the class-II aminoacyl-tRNA synthetase family. It depends on Zn(2+) as a cofactor.

It is found in the cytoplasm. It catalyses the reaction tRNA(Ala) + L-alanine + ATP = L-alanyl-tRNA(Ala) + AMP + diphosphate. Catalyzes the attachment of alanine to tRNA(Ala) in a two-step reaction: alanine is first activated by ATP to form Ala-AMP and then transferred to the acceptor end of tRNA(Ala). Also edits incorrectly charged Ser-tRNA(Ala) and Gly-tRNA(Ala) via its editing domain. In Desulforamulus reducens (strain ATCC BAA-1160 / DSM 100696 / MI-1) (Desulfotomaculum reducens), this protein is Alanine--tRNA ligase.